The primary structure comprises 476 residues: MTALDIIIMAAGKGTRMKSRIPKVLQRLAGRPLLHHVLGQAASLQARRVVVVTGHGATEVEAACAGLAGAGGTFDLKFVRQEPQLGTGHAVQQATPALAGDGTVVVLSGDVPLTQAATLRALVEAGAGERLALLTVRLPNPTGYGRIVRGEGGTVQRIVEHKDANDAERAIDEVYSGIMAVPAQRLAGWLARLTNDNAQGEYYLTDIVSMAVADGVPVAAHCIGDALQVAGVNSPAQLAELERAHQRAQAAALMEQGVRLADPARFDLRDDARSGARGEILCAQDVEIDVGCIFTGRVELGEGARIGAYCHISNATIAAGAVVHPFTHIDGEKAGAHVGEGALIGPFARLRPGAQLGREVHIGNFVEVKNSTLADGAKANHLAYLGDASVGERVNYGAGSITANYDGANKHRTVIEADVHIGSNCVLVAPVTIGAGGTVGGGSTITKDTPPGGLSVARGRQVSIANWKRPAKQAKG.

The tract at residues 1–235 is pyrophosphorylase; that stretch reads MTALDIIIMA…ALQVAGVNSP (235 aa). UDP-N-acetyl-alpha-D-glucosamine is bound by residues Lys-23, Gln-81, 86 to 87, 108 to 110, Gly-145, Glu-160, and Asn-233; these read GT and SGD. Asp-110 serves as a coordination point for Mg(2+). Mg(2+) is bound at residue Asn-233. Residues 236–256 are linker; that stretch reads AQLAELERAHQRAQAAALMEQ. The interval 257-476 is N-acetyltransferase; sequence GVRLADPARF…WKRPAKQAKG (220 aa). Residues Arg-351 and Lys-369 each coordinate UDP-N-acetyl-alpha-D-glucosamine. The Proton acceptor role is filled by His-381. Residues Tyr-384 and Asn-395 each coordinate UDP-N-acetyl-alpha-D-glucosamine. Acetyl-CoA-binding positions include Ala-398, 404 to 405, Ser-423, Gly-441, and Arg-458; that span reads NY.

In the N-terminal section; belongs to the N-acetylglucosamine-1-phosphate uridyltransferase family. The protein in the C-terminal section; belongs to the transferase hexapeptide repeat family. Homotrimer. It depends on Mg(2+) as a cofactor.

Its subcellular location is the cytoplasm. The enzyme catalyses alpha-D-glucosamine 1-phosphate + acetyl-CoA = N-acetyl-alpha-D-glucosamine 1-phosphate + CoA + H(+). The catalysed reaction is N-acetyl-alpha-D-glucosamine 1-phosphate + UTP + H(+) = UDP-N-acetyl-alpha-D-glucosamine + diphosphate. It participates in nucleotide-sugar biosynthesis; UDP-N-acetyl-alpha-D-glucosamine biosynthesis; N-acetyl-alpha-D-glucosamine 1-phosphate from alpha-D-glucosamine 6-phosphate (route II): step 2/2. The protein operates within nucleotide-sugar biosynthesis; UDP-N-acetyl-alpha-D-glucosamine biosynthesis; UDP-N-acetyl-alpha-D-glucosamine from N-acetyl-alpha-D-glucosamine 1-phosphate: step 1/1. Its pathway is bacterial outer membrane biogenesis; LPS lipid A biosynthesis. Catalyzes the last two sequential reactions in the de novo biosynthetic pathway for UDP-N-acetylglucosamine (UDP-GlcNAc). The C-terminal domain catalyzes the transfer of acetyl group from acetyl coenzyme A to glucosamine-1-phosphate (GlcN-1-P) to produce N-acetylglucosamine-1-phosphate (GlcNAc-1-P), which is converted into UDP-GlcNAc by the transfer of uridine 5-monophosphate (from uridine 5-triphosphate), a reaction catalyzed by the N-terminal domain. This chain is Bifunctional protein GlmU, found in Acidovorax ebreus (strain TPSY) (Diaphorobacter sp. (strain TPSY)).